Consider the following 56-residue polypeptide: uncharacterized protein (56 aa).

4Fe-4S ferredoxin-type domains are found at residues 2–28 (VKIDYKKCGYCGACVGVCEKLAINLIE) and 29–56 (HIIVIDEKKCNNCKLCTIVCPLNALEGE). Positions 9, 12, 15, 19, 38, 41, 44, and 48 each coordinate [4Fe-4S] cluster.

[4Fe-4S] cluster is required as a cofactor.

Ferredoxins are iron-sulfur proteins that transfer electrons in a wide variety of metabolic reactions. This is an uncharacterized protein from Methanocaldococcus jannaschii (strain ATCC 43067 / DSM 2661 / JAL-1 / JCM 10045 / NBRC 100440) (Methanococcus jannaschii).